Reading from the N-terminus, the 375-residue chain is Secondary metabolism regulator laeA (375 aa).

The span at 15 to 26 (ASPNRNNYSYQG) shows a compositional bias: polar residues. Disordered stretches follow at residues 15–37 (ASPN…RSRQ) and 50–75 (QEPP…TSHY).

It belongs to the methyltransferase superfamily. LaeA methyltransferase family. As to quaternary structure, component of the heterotrimeric velvet complex composed of laeA, veA and velB; VeA acting as a bridging protein between laeA and velB.

It localises to the nucleus. It carries out the reaction L-methionyl-[protein] + S-adenosyl-L-methionine = S-methyl-L-methionyl-[protein] + S-adenosyl-L-homocysteine. Methyltransferase that performs automethylation. No other methyl-accepting substrate has been identified yet. Component of the velvet transcription factor complex that acts as a global regulator for secondary metabolite gene expression. Controls the expression of the citric acid, demethylkotanin, orlandin, asperrubrol, tensidol B, atromentin and JBIR8 gene clusters. Also represses the expression of genes related to the production of BMS-192548 and aspernigrin A. This is Secondary metabolism regulator laeA from Aspergillus niger (strain ATCC 1015 / CBS 113.46 / FGSC A1144 / LSHB Ac4 / NCTC 3858a / NRRL 328 / USDA 3528.7).